The following is a 64-amino-acid chain: Ferredoxin-like protein in nif region (64 aa).

Residues 2–30 form the 4Fe-4S ferredoxin-type domain; it reads AFKIIASQCTQCGACEFECPSNAIELKGE. Residues cysteine 10, cysteine 13, cysteine 16, cysteine 20, cysteine 39, cysteine 42, cysteine 51, and cysteine 55 each contribute to the [4Fe-4S] cluster site.

Requires [4Fe-4S] cluster as cofactor.

The chain is Ferredoxin-like protein in nif region (fdxN) from Sinorhizobium fredii (strain NBRC 101917 / NGR234).